A 228-amino-acid polypeptide reads, in one-letter code: Ribonuclease 3 (228 aa).

The RNase III domain maps to 5-128 (LNRLMARLGY…IIGAMLLDGG (124 aa)). A Mg(2+)-binding site is contributed by Glu-41. The active site involves Asp-45. Positions 114 and 117 each coordinate Mg(2+). Residue Glu-117 is part of the active site. One can recognise a DRBM domain in the interval 155–225 (DAKTRLQEWL…ASLALEWLEQ (71 aa)).

It belongs to the ribonuclease III family. As to quaternary structure, homodimer. Mg(2+) serves as cofactor.

It is found in the cytoplasm. It catalyses the reaction Endonucleolytic cleavage to 5'-phosphomonoester.. Functionally, digests double-stranded RNA. Involved in the processing of primary rRNA transcript to yield the immediate precursors to the large and small rRNAs (23S and 16S). Processes some mRNAs, and tRNAs when they are encoded in the rRNA operon. Processes pre-crRNA and tracrRNA of type II CRISPR loci if present in the organism. The polypeptide is Ribonuclease 3 (Alcanivorax borkumensis (strain ATCC 700651 / DSM 11573 / NCIMB 13689 / SK2)).